A 200-amino-acid chain; its full sequence is 3-isopropylmalate dehydratase small subunit (200 aa).

It belongs to the LeuD family. LeuD type 1 subfamily. As to quaternary structure, heterodimer of LeuC and LeuD.

The catalysed reaction is (2R,3S)-3-isopropylmalate = (2S)-2-isopropylmalate. The protein operates within amino-acid biosynthesis; L-leucine biosynthesis; L-leucine from 3-methyl-2-oxobutanoate: step 2/4. In terms of biological role, catalyzes the isomerization between 2-isopropylmalate and 3-isopropylmalate, via the formation of 2-isopropylmaleate. In Vibrio atlanticus (strain LGP32) (Vibrio splendidus (strain Mel32)), this protein is 3-isopropylmalate dehydratase small subunit.